A 280-amino-acid polypeptide reads, in one-letter code: Adenosylcobinamide-GDP ribazoletransferase (280 aa).

Helical transmembrane passes span 4-24 (YLLAFKSGFGFLSTIPVGISM), 39-59 (VVGAVLGLLIGAVAFIGQVIF), 61-81 (GPVLAALLMGFIYYITGFNHL), 108-128 (TIGTGGVSFCILLLLTLYGSI), 196-216 (FLIGFVFGAIVCFLPFGWIGL), and 255-275 (TALIILAVLLQLSLNGYMGGF).

Belongs to the CobS family. Mg(2+) serves as cofactor.

It localises to the cell membrane. The enzyme catalyses alpha-ribazole + adenosylcob(III)inamide-GDP = adenosylcob(III)alamin + GMP + H(+). It catalyses the reaction alpha-ribazole 5'-phosphate + adenosylcob(III)inamide-GDP = adenosylcob(III)alamin 5'-phosphate + GMP + H(+). It participates in cofactor biosynthesis; adenosylcobalamin biosynthesis; adenosylcobalamin from cob(II)yrinate a,c-diamide: step 7/7. In terms of biological role, joins adenosylcobinamide-GDP and alpha-ribazole to generate adenosylcobalamin (Ado-cobalamin). Also synthesizes adenosylcobalamin 5'-phosphate from adenosylcobinamide-GDP and alpha-ribazole 5'-phosphate. This Methanosarcina barkeri (strain Fusaro / DSM 804) protein is Adenosylcobinamide-GDP ribazoletransferase.